We begin with the raw amino-acid sequence, 339 residues long: tRNA N6-adenosine threonylcarbamoyltransferase (339 aa).

Positions 111 and 115 each coordinate Fe cation. Substrate contacts are provided by residues 139–143 (LVSGG), Asp172, Gly185, Asp189, and Asn280. Asp308 contacts Fe cation.

The protein belongs to the KAE1 / TsaD family. Fe(2+) serves as cofactor.

It is found in the cytoplasm. It carries out the reaction L-threonylcarbamoyladenylate + adenosine(37) in tRNA = N(6)-L-threonylcarbamoyladenosine(37) in tRNA + AMP + H(+). Required for the formation of a threonylcarbamoyl group on adenosine at position 37 (t(6)A37) in tRNAs that read codons beginning with adenine. Is involved in the transfer of the threonylcarbamoyl moiety of threonylcarbamoyl-AMP (TC-AMP) to the N6 group of A37, together with TsaE and TsaB. TsaD likely plays a direct catalytic role in this reaction. This Phocaeicola vulgatus (strain ATCC 8482 / DSM 1447 / JCM 5826 / CCUG 4940 / NBRC 14291 / NCTC 11154) (Bacteroides vulgatus) protein is tRNA N6-adenosine threonylcarbamoyltransferase.